We begin with the raw amino-acid sequence, 63 residues long: Cecropin-B (63 aa).

The first 22 residues, 1–22 (MNFAKILSFVFALVLALSMTSA), serve as a signal peptide directing secretion. A propeptide spans 23 to 26 (APEP) (removed by a dipeptidylpeptidase). K47 is subject to 5-hydroxylysine; partial. The residue at position 61 (I61) is an Isoleucine amide.

It belongs to the cecropin family. Lepidopteran-B differs from lepidopteran-A by its hydroxylated residue. Highest expression in fat body and hemocytes. Is also expressed in Malpighian tubules and to a much lesser extent in midgut. Not present in silk gland.

It localises to the secreted. Its function is as follows. Cecropins have lytic and antibacterial activity against several Gram-positive and Gram-negative bacteria. This is Cecropin-B (CECB1) from Bombyx mori (Silk moth).